A 229-amino-acid chain; its full sequence is Ferric nitrobindin-like protein (229 aa).

Residues 1 to 54 (MSENSTPNNPVVPGAGADGPSLSDSASISGSDAVNLAAEQSKSTAHRNIPGLGD) form a disordered region. The segment covering 18–33 (DGPSLSDSASISGSDA) has biased composition (low complexity). The short motif at 82-88 (GVWRGEG) is the GXWXGXG element.

It belongs to the nitrobindin family.

In Corynebacterium glutamicum (strain R), this protein is Ferric nitrobindin-like protein.